A 448-amino-acid polypeptide reads, in one-letter code: Probable D-serine dehydratase (448 aa).

Lysine 119 carries the N6-(pyridoxal phosphate)lysine modification.

Belongs to the serine/threonine dehydratase family. DsdA subfamily. Pyridoxal 5'-phosphate serves as cofactor.

The catalysed reaction is D-serine = pyruvate + NH4(+). The polypeptide is Probable D-serine dehydratase (Chromobacterium violaceum (strain ATCC 12472 / DSM 30191 / JCM 1249 / CCUG 213 / NBRC 12614 / NCIMB 9131 / NCTC 9757 / MK)).